Reading from the N-terminus, the 748-residue chain is Adenosylcobalamin-dependent ribonucleoside-triphosphate reductase (748 aa).

Cys123 and Cys426 are disulfide-bonded. The effector region-1 stretch occupies residues 151 to 162; the sequence is SMPYSFMFDELM. The effector region-2 stretch occupies residues 172–320; it reads TKDNIAKLPP…IGNLIGKTVV (149 aa). Active-site residues include Cys415 and Glu417. The segment at 572 to 633 is adenosylcobalamin-binding-1; it reads FHYAGYLIQR…DPAFASAGTV (62 aa). Residues 692–733 are adenosylcobalamin-binding-2; the sequence is FKQAPKEPIDVKTYKQKCAAIHGSVAAVFAVQNADHDQKDLE.

This sequence belongs to the class II ribonucleoside-triphosphate reductase family. Monomer. Adenosylcob(III)alamin serves as cofactor.

The enzyme catalyses a 2'-deoxyribonucleoside 5'-triphosphate + [thioredoxin]-disulfide + H2O = a ribonucleoside 5'-triphosphate + [thioredoxin]-dithiol. Allosterically regulated by ATP and dNTP. The sequence is that of Adenosylcobalamin-dependent ribonucleoside-triphosphate reductase (rtpR) from Lacticaseibacillus paracasei (strain ATCC 334 / BCRC 17002 / CCUG 31169 / CIP 107868 / KCTC 3260 / NRRL B-441) (Lactobacillus paracasei).